We begin with the raw amino-acid sequence, 122 residues long: Semaphorin-like protein A43 (122 aa).

Residues 1 to 122 (MIYLYTADNV…RIMYLFYEYH (122 aa)) enclose the Sema domain.

Belongs to the semaphorin family.

The polypeptide is Semaphorin-like protein A43 (A43R) (Homo sapiens (Human)).